We begin with the raw amino-acid sequence, 251 residues long: Transcriptional cofactor Bfc (251 aa).

Interacts with srp (via GATA-type Zn-finger domain); this interaction enhances srp binding to the promoter of crq/croquemort.

It is found in the nucleus. Functionally, transcriptional cofactor involved in efferocytosis. Together with srp mediates expression of the phagocytic receptor crq/croquemort in response to apoptotic cells, and is up-regulated by crq/croquemort in a positive feedback mechanism. Involved in macrophage engulfment and clearance of apoptotic cells during embryogenesis. The chain is Transcriptional cofactor Bfc from Drosophila melanogaster (Fruit fly).